A 625-amino-acid polypeptide reads, in one-letter code: Protein LEO1 homolog (625 aa).

2 disordered regions span residues 1–214 and 415–625; these read MVKG…DMVL and EREK…SDED. 2 stretches are compositionally biased toward acidic residues: residues 40-55 and 63-80; these read DEAE…GEAE and EAES…PGES. Composition is skewed to basic and acidic residues over residues 97–113, 121–137, and 182–197; these read SEAR…EHGG, QEVV…KHYE, and EYVR…RSPI. Ser203 carries the phosphoserine modification. The span at 415-425 shows a compositional bias: basic and acidic residues; the sequence is EREKEKREKAE. Residues 415-539 adopt a coiled-coil conformation; that stretch reads EREKEKREKA…ETEEEEEEKS (125 aa). Polar residues predominate over residues 426–436; it reads SQNLKASTKLS. The segment covering 471-491 has biased composition (basic and acidic residues); sequence YRSNRGYEEDLEAEAQRERRI. The segment covering 492-501 has biased composition (basic residues); that stretch reads LNAKKSHKGI. The segment covering 523 to 537 has biased composition (acidic residues); the sequence is EREESEYETEEEEEE. Residues 538 to 547 are compositionally biased toward basic and acidic residues; the sequence is KSPARGRGKD. Residues Ser548, Ser570, Ser600, Ser605, and Ser622 each carry the phosphoserine modification. Acidic residues predominate over residues 548–561; it reads SEDEYEEDAEEDEE.

Belongs to the LEO1 family. As to quaternary structure, component of the nuclear PAF1 complex (PAF1C), which consists of VIP2/ELF7/PAF1, VIP3/SKI8/WDR61, VIP4/LEO1, VIP5/RTF1, VIP6/ELF8/CTR9 and CDC73. Interacts with VIP3 and VIP6. In terms of tissue distribution, expressed in roots, shoot apices, stems, cauline leaves, inflorescence apices and flowers.

The protein resides in the nucleus. Functionally, component of the PAF1 complex (PAF1C) which is involved in histone modifications such as methylation on histone H3 'Lys-4' (H3K4me3). Involved in regulation of flowering time. Required for the expression of the flowering repressor and MADS box gene FLC. Involved in the control of seed dormancy and germination. This Arabidopsis thaliana (Mouse-ear cress) protein is Protein LEO1 homolog.